The primary structure comprises 1058 residues: Carbamoyl phosphate synthase large chain (1058 aa).

The tract at residues 1-401 (MPKRKDIQKI…SLLKACRSLE (401 aa)) is carboxyphosphate synthetic domain. Positions 129, 169, 175, 176, 208, 210, 215, 241, 242, 243, 284, and 298 each coordinate ATP. The 195-residue stretch at 133–327 (KQLMQELDQP…IAKLAAKIAV (195 aa)) folds into the ATP-grasp 1 domain. Mg(2+) contacts are provided by Q284, E298, and N300. Mn(2+) is bound by residues Q284, E298, and N300. The tract at residues 402-546 (IGVCHNEMTS…YSTYELENES (145 aa)) is oligomerization domain. Positions 547–929 (VQSNKESILV…ALYKAFEANN (383 aa)) are carbamoyl phosphate synthetic domain. The ATP-grasp 2 domain maps to 671 to 861 (EKALKELGIP…MAQIATKLIL (191 aa)). ATP-binding residues include R707, S746, I748, E752, G777, V778, H779, S780, Q820, and E832. Positions 820, 832, and 834 each coordinate Mg(2+). Positions 820, 832, and 834 each coordinate Mn(2+). In terms of domain architecture, MGS-like spans 930–1058 (SHLSEFGQIV…ESRCFNIEAI (129 aa)). Residues 930-1058 (SHLSEFGQIV…ESRCFNIEAI (129 aa)) form an allosteric domain region.

This sequence belongs to the CarB family. In terms of assembly, composed of two chains; the small (or glutamine) chain promotes the hydrolysis of glutamine to ammonia, which is used by the large (or ammonia) chain to synthesize carbamoyl phosphate. Tetramer of heterodimers (alpha,beta)4. Mg(2+) is required as a cofactor. Mn(2+) serves as cofactor.

It carries out the reaction hydrogencarbonate + L-glutamine + 2 ATP + H2O = carbamoyl phosphate + L-glutamate + 2 ADP + phosphate + 2 H(+). The enzyme catalyses hydrogencarbonate + NH4(+) + 2 ATP = carbamoyl phosphate + 2 ADP + phosphate + 2 H(+). Its pathway is amino-acid biosynthesis; L-arginine biosynthesis; carbamoyl phosphate from bicarbonate: step 1/1. It functions in the pathway pyrimidine metabolism; UMP biosynthesis via de novo pathway; (S)-dihydroorotate from bicarbonate: step 1/3. Its function is as follows. Large subunit of the glutamine-dependent carbamoyl phosphate synthetase (CPSase). CPSase catalyzes the formation of carbamoyl phosphate from the ammonia moiety of glutamine, carbonate, and phosphate donated by ATP, constituting the first step of 2 biosynthetic pathways, one leading to arginine and/or urea and the other to pyrimidine nucleotides. The large subunit (synthetase) binds the substrates ammonia (free or transferred from glutamine from the small subunit), hydrogencarbonate and ATP and carries out an ATP-coupled ligase reaction, activating hydrogencarbonate by forming carboxy phosphate which reacts with ammonia to form carbamoyl phosphate. The polypeptide is Carbamoyl phosphate synthase large chain (Streptococcus pyogenes serotype M18 (strain MGAS8232)).